Here is a 209-residue protein sequence, read N- to C-terminus: Ribosomal RNA large subunit methyltransferase E (209 aa).

Gly-63, Trp-65, Asp-83, Asp-99, and Asp-124 together coordinate S-adenosyl-L-methionine. Catalysis depends on Lys-164, which acts as the Proton acceptor.

It belongs to the class I-like SAM-binding methyltransferase superfamily. RNA methyltransferase RlmE family.

The protein localises to the cytoplasm. It carries out the reaction uridine(2552) in 23S rRNA + S-adenosyl-L-methionine = 2'-O-methyluridine(2552) in 23S rRNA + S-adenosyl-L-homocysteine + H(+). Functionally, specifically methylates the uridine in position 2552 of 23S rRNA at the 2'-O position of the ribose in the fully assembled 50S ribosomal subunit. This Aliivibrio salmonicida (strain LFI1238) (Vibrio salmonicida (strain LFI1238)) protein is Ribosomal RNA large subunit methyltransferase E.